The primary structure comprises 172 residues: Peptide deformylase (172 aa).

Positions 94 and 136 each coordinate Fe cation. E137 is an active-site residue. Residue H140 coordinates Fe cation.

It belongs to the polypeptide deformylase family. Fe(2+) is required as a cofactor.

It catalyses the reaction N-terminal N-formyl-L-methionyl-[peptide] + H2O = N-terminal L-methionyl-[peptide] + formate. Functionally, removes the formyl group from the N-terminal Met of newly synthesized proteins. Requires at least a dipeptide for an efficient rate of reaction. N-terminal L-methionine is a prerequisite for activity but the enzyme has broad specificity at other positions. The chain is Peptide deformylase from Pelagibacter ubique (strain HTCC1062).